The sequence spans 962 residues: CRACD-like protein (962 aa).

3 disordered regions span residues 38–102, 131–174, and 212–871; these read GKKK…PESG, NVKM…HDVG, and PAES…QEPV. The segment covering 46-61 has biased composition (polar residues); that stretch reads PSSTGSSTWKQSQTRN. The residue at position 92 (S92) is a Phosphoserine. Over residues 224–244 the composition is skewed to basic residues; the sequence is AKHKLQVKPRNQRSSKMRRLS. Residues 245–256 are compositionally biased toward polar residues; that stretch reads SRAQSESLSDLT. The span at 266 to 278 shows a compositional bias: basic and acidic residues; sequence EKPLLEVSPEERP. Composition is skewed to pro residues over residues 292-303 and 354-365; these read EPGPPAPLPPPG and PPSPPEGPPNPG. A compositionally biased stretch (low complexity) spans 407–425; sequence PEGDTTPPETDPAATSEAP. 2 stretches are compositionally biased toward basic and acidic residues: residues 429–440 and 459–480; these read DGPERSVPKEAE and EPER…ERIG. S490 bears the Phosphoserine mark. Residues 503–521 show a composition bias toward low complexity; it reads AAASEGPAASPPLAAAESP. Basic and acidic residues-rich tracts occupy residues 536–546, 555–570, 631–642, and 709–728; these read APERPKAERAE, AAPE…ELRG, KLAERGPQDSGD, and YSAE…EEKC. A compositionally biased stretch (pro residues) spans 753-764; sequence PEPLSSKPPLPR. 2 stretches are compositionally biased toward basic and acidic residues: residues 784 to 806 and 844 to 869; these read PGER…RGAE and QEDK…RGQE.

The protein is CRACD-like protein of Homo sapiens (Human).